Reading from the N-terminus, the 301-residue chain is Fluoroquinolones export ATP-binding protein Rv2688c (301 aa).

Residues 18 to 246 enclose the ABC transporter domain; that stretch reads IRVRGLTFRY…RSRRRVRVEY (229 aa). 52-59 lines the ATP pocket; the sequence is GPSGAGKS.

The protein belongs to the ABC transporter superfamily. In terms of assembly, the complex is composed of 2 ATP-binding proteins (Rv2688c) and 2 transmembrane proteins (Rv2686c and Rv2687c).

It is found in the cell membrane. Its activity is regulated as follows. Inhibited by reserpine and verapamil. Functionally, part of the ABC transporter complex Rv2686c/Rv2687c/Rv2688c involved in fluoroquinolones export. Confers resistance to ciprofloxacin and, to a lesser extent, norfloxacin, moxifloxacin and sparfloxacin. Probably responsible for energy coupling to the transport system. This Mycobacterium tuberculosis (strain ATCC 25618 / H37Rv) protein is Fluoroquinolones export ATP-binding protein Rv2688c.